The chain runs to 329 residues: Peroxidase 51 (329 aa).

An N-terminal signal peptide occupies residues 1-25 (MVVMNKTNLLLLILSLFLAINLSSA). 4 cysteine pairs are disulfide-bonded: Cys36–Cys119, Cys69–Cys74, Cys125–Cys325, and Cys204–Cys236. His67 acts as the Proton acceptor in catalysis. Residues Asp68, Val71, Gly73, Asp75, and Ser77 each coordinate Ca(2+). Position 167 (Pro167) interacts with substrate. His197 provides a ligand contact to heme b. Thr198 is a Ca(2+) binding site. N-linked (GlcNAc...) asparagine glycosylation occurs at Asn215. Residues Asp249, Thr252, and Asp257 each contribute to the Ca(2+) site.

The protein belongs to the peroxidase family. Classical plant (class III) peroxidase subfamily. Heme b serves as cofactor. Requires Ca(2+) as cofactor.

It localises to the secreted. The catalysed reaction is 2 a phenolic donor + H2O2 = 2 a phenolic radical donor + 2 H2O. In terms of biological role, removal of H(2)O(2), oxidation of toxic reductants, biosynthesis and degradation of lignin, suberization, auxin catabolism, response to environmental stresses such as wounding, pathogen attack and oxidative stress. These functions might be dependent on each isozyme/isoform in each plant tissue. This is Peroxidase 51 (PER51) from Arabidopsis thaliana (Mouse-ear cress).